Here is a 788-residue protein sequence, read N- to C-terminus: Choline transporter-like protein 1 (788 aa).

The chain crosses the membrane as a helical span at residues F98–G118. N-linked (GlcNAc...) asparagine glycosylation occurs at N276. 4 helical membrane-spanning segments follow: residues W329 to I349, L352 to G372, F409 to I429, and L458 to L478. N-linked (GlcNAc...) asparagine glycosylation occurs at N497. The next 5 membrane-spanning stretches (helical) occupy residues L531–G551, L583–L603, W620–T640, A679–F699, and Y718–F738.

Belongs to the CTL (choline transporter-like) family.

It is found in the membrane. This chain is Choline transporter-like protein 1 (chtl-1), found in Caenorhabditis briggsae.